The chain runs to 411 residues: UPF0754 membrane protein Npun_R4433 (411 aa).

The next 2 helical transmembrane spans lie at 3–23 (WSHLWLYVSPPVLGGIIGYFT) and 387–407 (IVTLGGVLGFVIGLLQTVFLV).

Belongs to the UPF0754 family.

It localises to the cell inner membrane. The sequence is that of UPF0754 membrane protein Npun_R4433 from Nostoc punctiforme (strain ATCC 29133 / PCC 73102).